The following is a 2116-amino-acid chain: MERLLDEVLAPGGPYNLTVGSWVRDHVRSIVEGAWEVRDVVSAAQKRAIVAVIPRPVFTQMQVSDHPALHAISRYTRRHWIEWGPKEALHVLIDPSPGLLREVARVERRWVALCLHRTARKLATALAETASEAWHADYVCALRGAPSGPFYVHPEDVPHGGRAVADRCLLYYTPMQMCELMRTIDATLLVAVDLWPVALAAHVGDDWDDLGIAWHLDHDGGCPADCRGAGAGPTPGYTRPCTTRIYQVLPDTAHPGRLYRCGPRLWTRDCAVAELSWEVAQHCGHQARVRAVRCTLPIRHVRSLQPSARVRLPDLVHLAEVGRWRWFSLPRPVFQRMLSYCKTLSPDAYYSERVFKFKNALSHSITLAGNVLQEGWKGTCAEEDALCAYVAFRAWQSNARLAGIMKSAKRCAADSLSVAGWLDTIWGAIKRFFGSVPLAERMEEWEQDAAVAAFDRGPLEDGGRHLDTVQPPKSPPRPEIAATWIVHAASADRHCACAPRCDVPRERPSAPAGPPDDEALIPPWLFAEHRALRCREWDFEVLRARADTAAAPAPLAPRPARYPTVLYRHPAHHGPWLTLDEPGEADAALVLCDPLGQPLRGPERHFAAGAHMCAQARGLQAFVRVVPPPERPWADGGARAWAKFFRGCAWAQRLLGEPAVMHLPYTDGDVPQLIALALRTLAQQGAALALSVRDLPGGAAFDANAVTAAVRAGPGQSAATSSPPGDPPPPRCARRSQRHSDARGTPPPAPARDPPPPAPSPPAPPRAGDPVPPTSAGPADRARDAELEVAYEPSGPPTSTKADPDSDIVESYARAAGPVHLRVRDIMDPPPGCKVVVNAANEGLLAGSGVCGAIFANATAALAADCRRLAPCPTGEAVATPGHGCGYTHIIHAVAPRRPRDPAALEEGEALLERAYRSIVALAAARRWARVACPLLGAGVYGWSAAESLRAALAATRTEPAERVSLHICHPDRATLTHASVLVGAGLAARRVSPPPTEPLASCPAGDPGRPAQRSASPPATPLGDATAPEPRGCQGCELCRYTRVTNDRAYVNLWLERDRGATSWAMRIPEVVVYGPEHLATHFPLNHYSVLKPAEVRPPRGMCGSDMWRCRGWQGVPQVRCTPSNAHAALCRTGVPPRVSTRGGELDPNTCWLRAAANVAQAARACGAYTSAGCPRCAYGRALSEARTHKDFAALSQRWSASHADASSDGTGDPLDPLMETVGCACSRVWVGSEHEAPPDHLLVSLHRAPNGPWGVVLEVRARPEGGNPTGHFVCAVGGGPRRVSDRPHLWLAVPLSRGGGTCAATDEGLAQAYYDDLEVRRLGDDAMARAALASVQRPRKGPYNIRVWNMAAGAGKTTRILAAFTREDLYVCPTNALLHEIQAKLRARDIEIKNAATYERALTKPLAAYRRIYIDEAFTLGGEYCAFVASQTTAEVICVGDRDQCGPHYANNCRTPVPDRWPTERSRHTWRFPDCWAARLRAGLDYDIEGERTGTFACNLWDGRQVDLHLAFSRETVRRLHEAGIRAYTVREAQGMSVGTACIHVGRDGTDVALALTRDLAIVSLTRASDALYLHELEDGSLRAAGLSAFLDAGALAELKEVPAGIDRVVAVEQAPPPLPPADGIPEAQDVPPFCPRTLEELVFGRAGHPHYADLNRVTEGEREVRYMRISRHLLNKNHTEMPGTERVLSAVCAVRRYRAGEDGSTLRTAVARQHPRPFRQIPPPRVTAGVAQEWRMTYLRERIDLTDVYTQMGVAARELTDRYARRYPEIFAGMCTAQSLSVPAFLKATLKCVDAALGPRDTEDCHAAQGKAGLEIRAWAKEWVQVMSPHFRAIQKIIMRALRPQFLVAAGHTEPEVDAWWQAHYTTNAIEVDFTEFDMNQTLATRDVELEISAALLGLPCAEDYRALRAGSYCTLRELGSTETGCERTSGEPATLLHNTTVAMCMAMRMVPKGVRWAGIFQGDDMVIFLPEGARSAALKWTPAEVGLFGFHIPVKHVSTPTPSFCGHVGTAAGLFHDVMHQAIKVLCRRFDPDVLEEQQVALLDRLRGVYAALPDTVAANAAYYDYSAERVLAIVRELTAYARGRGLDHPATIGALEEIQTPYARANLHDAD.

Residues Glu36–Ile49 form a required for efficient proteolysis and P150-P90 interaction region. The region spanning Val57–Gln247 is the Alphavirus-like MT domain. Residues Ala712–Pro723 are compositionally biased toward low complexity. The segment at Ala712–Ala782 is disordered. 3 short sequence motifs (pxxPxR; class II SH3-binding) span residues Pro727–Cys732, Pro747–Arg752, and Pro761–Arg766. The span at Thr745 to Ser775 shows a compositional bias: pro residues. The Macro domain occupies Ser806 to Ala985. Positions Val992–Pro1031 are disordered. The Peptidase C27 domain occupies Leu1000–Gly1301. Residue Cys1152 is the For cysteine protease activity of the active site. The segment at Cys1152–Ala1183 is interaction with host CALM1. Zn(2+) is bound by residues Cys1175, Cys1178, Cys1227, and His1273. The EF-hand-like stretch occupies residues Phe1193–Ser1228. The active-site For cysteine protease activity is His1273. In terms of domain architecture, (+)RNA virus helicase ATP-binding spans Glu1320–Ser1468. Met1352–Thr1359 provides a ligand contact to a ribonucleoside 5'-triphosphate. One can recognise a (+)RNA virus helicase C-terminal domain in the interval Arg1469–Asp1609. The interval Tyr1700 to Leu1900 is involved in P150-P90 interaction. Positions Thr1870 to Ala1981 constitute a RdRp catalytic domain. A Human RB1 binding motif is present at residues Leu1902–Glu1906.

In terms of assembly, interacts with RNA-directed RNA polymerase p90. Interacts with host CALM1; this interaction is necessary for the protease activity and viral infectivity. Interacts with host C1QBP. Interacts with the capsid protein. As to quaternary structure, interacts with human RB1/retinoblastoma protein. Interacts with protease/methyltransferase p150. Zn(2+) is required as a cofactor. Specific enzymatic cleavage by its own cysteine protease yield mature proteins p150 and p90.

It is found in the host membrane. The protein resides in the host cytoplasm. The protein localises to the host perinuclear region. The enzyme catalyses RNA(n) + a ribonucleoside 5'-triphosphate = RNA(n+1) + diphosphate. It carries out the reaction a ribonucleoside 5'-triphosphate + H2O = a ribonucleoside 5'-diphosphate + phosphate + H(+). It catalyses the reaction ATP + H2O = ADP + phosphate + H(+). Its function is as follows. Probable principal replicase for the negative-strand DNA, which replicates the 40S (+) genomic RNA into (-) antigenomic RNA. It cannot replicate the (-) into (+) until cleaved into p150 and p90 mature proteins. In terms of biological role, protease that cleaves the precursor polyprotein into two mature products. Together with RNA-directed RNA polymerase p90, replicates the 40S genomic and antigenomic RNA by recognizing replications specific signals. The heterodimer P150/p90 is probably the principal replicase for positive-strand genomic RNA and the 24S subgenomic RNA, which codes for structural proteins. Responsible for the mRNA-capping of the viral mRNAs. This function is necessary since all viral RNAs are synthesized in the cytoplasm, and host capping enzymes are restricted to the nucleus. Forms fibers late in the infection that may be involved in cell-to-cell spread of the virus RNA in the absence of virus particle formation. Functionally, together with protease/methyltransferase p150, replicates the 40S genomic and antigenomic RNA by recognizing replications specific signals. The heterodimer P150/p90 is probably the principal replicase for positive-strand genomic RNA and the 24S subgenomic RNA, which codes for structural proteins. A helicase activity is probably also present. This is Non-structural polyprotein p200 from Homo sapiens (Human).